The following is a 473-amino-acid chain: GTPase Der (473 aa).

EngA-type G domains lie at 3-166 (PVIA…ENPE) and 177-350 (IRIG…ESAM). GTP-binding positions include 9–16 (GRPNVGKS), 56–60 (DTGGL), 118–121 (NKTD), 183–190 (GRPNVGKS), 230–234 (DTAGV), and 295–298 (NKWD). The KH-like domain maps to 351-435 (SKWPTNRLTA…PIRFEFKSGE (85 aa)). A compositionally biased stretch (basic and acidic residues) spans 444-458 (RLTPRQKVKKDNDLK). Positions 444 to 473 (RLTPRQKVKKDNDLKKGRRIKKTRQKSVKR) are disordered. Residues 459–473 (KGRRIKKTRQKSVKR) show a composition bias toward basic residues.

The protein belongs to the TRAFAC class TrmE-Era-EngA-EngB-Septin-like GTPase superfamily. EngA (Der) GTPase family. Associates with the 50S ribosomal subunit.

In terms of biological role, GTPase that plays an essential role in the late steps of ribosome biogenesis. The protein is GTPase Der of Marinobacter nauticus (strain ATCC 700491 / DSM 11845 / VT8) (Marinobacter aquaeolei).